Reading from the N-terminus, the 214-residue chain is tRNA (guanine-N(7)-)-methyltransferase (214 aa).

S-adenosyl-L-methionine-binding residues include Glu-45, Glu-70, Asp-97, and Asp-119. Residue Asp-119 is part of the active site. Substrate contacts are provided by residues Lys-123, Asp-155, and 192–195 (TEYE).

Belongs to the class I-like SAM-binding methyltransferase superfamily. TrmB family.

The enzyme catalyses guanosine(46) in tRNA + S-adenosyl-L-methionine = N(7)-methylguanosine(46) in tRNA + S-adenosyl-L-homocysteine. The protein operates within tRNA modification; N(7)-methylguanine-tRNA biosynthesis. In terms of biological role, catalyzes the formation of N(7)-methylguanine at position 46 (m7G46) in tRNA. The polypeptide is tRNA (guanine-N(7)-)-methyltransferase (Clostridioides difficile (strain 630) (Peptoclostridium difficile)).